Reading from the N-terminus, the 127-residue chain is Fluoride-specific ion channel FluC 2 (127 aa).

Transmembrane regions (helical) follow at residues 4-24, 31-51, 62-82, and 94-114; these read IIAI…LSLL, FWIT…ITNL, IVIG…TFTF, and VLAL…GLAG. Na(+) is bound by residues Gly72 and Thr75.

This sequence belongs to the fluoride channel Fluc/FEX (TC 1.A.43) family.

The protein resides in the cell membrane. The catalysed reaction is fluoride(in) = fluoride(out). Its activity is regulated as follows. Na(+) is not transported, but it plays an essential structural role and its presence is essential for fluoride channel function. Fluoride-specific ion channel. Important for reducing fluoride concentration in the cell, thus reducing its toxicity. In Lactiplantibacillus plantarum (strain ATCC BAA-793 / NCIMB 8826 / WCFS1) (Lactobacillus plantarum), this protein is Fluoride-specific ion channel FluC 2.